The chain runs to 454 residues: uncharacterized protein (454 aa).

Residues 1–18 (MRRFTLFVFFLSISIAYA) form the signal peptide.

This is an uncharacterized protein from Caenorhabditis elegans.